The sequence spans 99 residues: UPF0122 protein UU142 (99 aa).

It belongs to the UPF0122 family.

In terms of biological role, might take part in the signal recognition particle (SRP) pathway. This is inferred from the conservation of its genetic proximity to ftsY/ffh. May be a regulatory protein. The chain is UPF0122 protein UU142 from Ureaplasma parvum serovar 3 (strain ATCC 700970).